A 311-amino-acid chain; its full sequence is tRNA dimethylallyltransferase (311 aa).

An ATP-binding site is contributed by 9–16 (GPTAVGKT). 11–16 (TAVGKT) provides a ligand contact to substrate. The interaction with substrate tRNA stretch occupies residues 34 to 37 (DSMQ).

Belongs to the IPP transferase family. In terms of assembly, monomer. It depends on Mg(2+) as a cofactor.

It catalyses the reaction adenosine(37) in tRNA + dimethylallyl diphosphate = N(6)-dimethylallyladenosine(37) in tRNA + diphosphate. Catalyzes the transfer of a dimethylallyl group onto the adenine at position 37 in tRNAs that read codons beginning with uridine, leading to the formation of N6-(dimethylallyl)adenosine (i(6)A). The protein is tRNA dimethylallyltransferase of Clostridium botulinum (strain Hall / ATCC 3502 / NCTC 13319 / Type A).